The chain runs to 133 residues: Alcohol dehydrogenase, 15 kDa subunit (133 aa).

An N-terminal signal peptide occupies residues M1–A24. Positions M23–F43 are disordered. The residue at position 25 (Q25) is a Pyrrolidone carboxylic acid.

In terms of assembly, the alcohol dehydrogenase multicomponent enzyme system is composed of a dehydrogenase subunit I (AdhA), a cytochrome c subunit II (AdhB) and a subunit III (AdhS).

The protein localises to the cell membrane. In terms of biological role, part of the alcohol dehydrogenase multicomponent enzyme system which is involved in the production of acetic acid and in the ethanol oxidase respiratory chain. Does not play an obligatory role for the alcohol dehydrogenase (ADH) activity. This Gluconobacter oxydans (strain 621H) (Gluconobacter suboxydans) protein is Alcohol dehydrogenase, 15 kDa subunit.